The sequence spans 360 residues: Ribosomal RNA large subunit methyltransferase M (360 aa).

S-adenosyl-L-methionine is bound by residues S187, 220–223, D239, D259, and D276; that span reads CPGG. The active-site Proton acceptor is the K305.

The protein belongs to the class I-like SAM-binding methyltransferase superfamily. RNA methyltransferase RlmE family. RlmM subfamily. As to quaternary structure, monomer.

Its subcellular location is the cytoplasm. The catalysed reaction is cytidine(2498) in 23S rRNA + S-adenosyl-L-methionine = 2'-O-methylcytidine(2498) in 23S rRNA + S-adenosyl-L-homocysteine + H(+). Functionally, catalyzes the 2'-O-methylation at nucleotide C2498 in 23S rRNA. The chain is Ribosomal RNA large subunit methyltransferase M from Photobacterium profundum (strain SS9).